A 156-amino-acid chain; its full sequence is Endoribonuclease YbeY (156 aa).

Zn(2+) is bound by residues His-122, His-126, and His-132.

Belongs to the endoribonuclease YbeY family. Zn(2+) is required as a cofactor.

Its subcellular location is the cytoplasm. In terms of biological role, single strand-specific metallo-endoribonuclease involved in late-stage 70S ribosome quality control and in maturation of the 3' terminus of the 16S rRNA. The chain is Endoribonuclease YbeY from Moorella thermoacetica (strain ATCC 39073 / JCM 9320).